The following is an 85-amino-acid chain: Large ribosomal subunit protein bL27 (85 aa).

Positions 1–22 (MAHKKGQGSSRNGRDSPGQRRG) are disordered.

Belongs to the bacterial ribosomal protein bL27 family.

This Anaeromyxobacter dehalogenans (strain 2CP-1 / ATCC BAA-258) protein is Large ribosomal subunit protein bL27.